The sequence spans 301 residues: GTPase Era (301 aa).

An Era-type G domain is found at 7 to 175; that stretch reads YCGFIAIVGR…AGIVRKHLPE (169 aa). Residues 15–22 form a G1 region; that stretch reads GRPNVGKS. Position 15–22 (15–22) interacts with GTP; it reads GRPNVGKS. The segment at 41-45 is G2; it reads QTTRH. The interval 62-65 is G3; that stretch reads DTPG. GTP is bound by residues 62–66 and 124–127; these read DTPGL and NKVD. The interval 124 to 127 is G4; that stretch reads NKVD. Residues 154–156 form a G5 region; it reads ISA. Residues 206-283 form the KH type-2 domain; it reads LGAELPYSVT…HLELWVKVKS (78 aa).

Belongs to the TRAFAC class TrmE-Era-EngA-EngB-Septin-like GTPase superfamily. Era GTPase family. As to quaternary structure, monomer.

Its subcellular location is the cytoplasm. It localises to the cell inner membrane. An essential GTPase that binds both GDP and GTP, with rapid nucleotide exchange. Plays a role in 16S rRNA processing and 30S ribosomal subunit biogenesis and possibly also in cell cycle regulation and energy metabolism. In Salmonella paratyphi B (strain ATCC BAA-1250 / SPB7), this protein is GTPase Era.